Consider the following 472-residue polypeptide: D-2-hydroxyglutarate dehydrogenase (472 aa).

The region spanning 36-215 (WTPNPLAIAL…VEATLRLTDP (180 aa)) is the FAD-binding PCMH-type domain. Residues arginine 323, threonine 327, and lysine 337 each contribute to the (R)-2-hydroxyglutarate site. Residues arginine 323, threonine 327, and lysine 337 each coordinate (R)-malate. Zn(2+) contacts are provided by histidine 372 and histidine 379. Residue asparagine 381 coordinates (R)-2-hydroxyglutarate. Glutamate 418 is a binding site for Zn(2+). Position 419 (histidine 419) interacts with (R)-2-hydroxyglutarate. Position 419 (histidine 419) interacts with (R)-malate.

It belongs to the FAD-binding oxidoreductase/transferase type 4 family. Homodimer. FAD is required as a cofactor.

It catalyses the reaction (R)-2-hydroxyglutarate + A = 2-oxoglutarate + AH2. It carries out the reaction (R)-malate + A = oxaloacetate + AH2. Activated by Zn(2+) ions. Its function is as follows. Catalyzes the dehydrogenation of (R)-2-hydroxyglutarate (D-2-hydroxyglutarate) to 2-oxoglutarate. Also has a low activity on D-malate in vitro. Is functionally tied to L-serine biosynthesis, via its coupling with the D-3-phosphoglycerate dehydrogenase SerA, encoded by the adjacent gene in the locus. Active in vitro with the artificial electron acceptor 2,6-dichlorophenolindophenol (DCPIP), but not with NAD, NADP, or cytochrome c. Also displays a very low oxidase activity in vitro on D-2-hydroxyglutarate and L-2-hydroxyglutarate with O2 as the electron acceptor, but this activity is most likely not physiological. The polypeptide is D-2-hydroxyglutarate dehydrogenase (Xanthomonas citri pv. viticola (strain LMG 965 / NCPPB 2475 / ICMP 3867 / CFBP 7660) (Xanthomonas campestris pv. viticola)).